Reading from the N-terminus, the 347-residue chain is Leucine-rich repeat-containing protein 69 (347 aa).

LRR repeat units lie at residues 38–60 (GLKT…CNLT), 61–82 (QLTT…MKYL), 84–105 (SLKN…ACDG), 108–129 (NLIL…VSRL), 131–153 (SLTY…CFLE), 154–175 (NLVE…IKFL), 177–199 (KLQK…CDLK), and 200–222 (KLRI…QDLK).

This sequence belongs to the LRRC69 family.

The polypeptide is Leucine-rich repeat-containing protein 69 (LRRC69) (Homo sapiens (Human)).